A 185-amino-acid chain; its full sequence is Ribosome-recycling factor (185 aa).

The interval 136-155 (NDDLKKLEKNGDITEDELRA) is disordered.

The protein belongs to the RRF family.

It localises to the cytoplasm. In terms of biological role, responsible for the release of ribosomes from messenger RNA at the termination of protein biosynthesis. May increase the efficiency of translation by recycling ribosomes from one round of translation to another. The polypeptide is Ribosome-recycling factor (Bacillus velezensis (strain DSM 23117 / BGSC 10A6 / LMG 26770 / FZB42) (Bacillus amyloliquefaciens subsp. plantarum)).